A 1098-amino-acid polypeptide reads, in one-letter code: MLEGDLVSKMLRAVLQSHKNGVALPRLQGEYRSLTGDWIPFKQLGFPTLEAYLRSVPAVVRIETSRSGEITCYAMACTETARIAQLVARQRSSKRKTGRQVNCQMRVKKTMPFFLEGKPKATLRQPGFASNFSVGKKPNPAPLRDKGNSVGVKPDAEMSPYMLHTTLGNEAFKDIPVQRHVTMSTNNRFSPKASLQPPLQMHLSRTSTKEMSDNLNQTVEKPNVKPPASYTYKMDEVQNRIKEILNKHNNGIWISKLPHFYKELYKEDLNQGILQQFEHWPHICTVEKPCSGGQDLLLYPAKRKQLLRSELDTEKVPLSPLPGPKQTPPLKGCPTVMAGDFKEKVADLLVKYTSGLWASALPKAFEEMYKVKFPEDALKNLASLSDVCSIDYISGNPQKAILYAKLPLPTDKIQKDAGQAHGDNDIKAMVEQEYLQVEESIAESANTFMEDITVPPLMIPTEASPSVLVVELSNTNEVVIRYVGKDYSAAQELMEDEMKEYYSKNPKITPVQAVNVGQLLAVNAEEDAWLRAQVISTEENKIKVCYVDYGFSENVEKSKAYKLNPKFCSLSFQATKCKLAGLEVLSDDPDLVKVVESLTCGKIFAVEILDKADIPLVVLYDTSGEDDININATCLKAICDKSLEVHLQVDAMYTNVKVTNICSDGTLYCQVPCKGLNKLSDLLRKIEDYFHCKHMTSECFVSLPFCGKICLFHCKGKWLRVEITNVHSSRALDVQFLDSGTVTSVKVSELREIPPRFLQEMIAIPPQAIKCCLADLPQSIGMWTPDAVLWLRDSVLNCSDCSIKVTKVDETRGIAHVYLFTPKNFPDPHRSINRQITNADLWKHQKDVFLSAISSGADSPNSKNGNMPMSGNTGENFRKNLTDVIKKSMVDHTSAFSTEELPPPVHLSKPGEHMDVYVPVACHPGYFVIQPWQEIHKLEVLMEEMILYYSVSEERHIAVEKDQVYAAKVENKWHRVLLKGILTNGLVSVYELDYGKHELVNIRKVQPLVDMFRKLPFQAVTAQLAGVKCNQWSEEASMVFRNHVEKKPLVALVQTVIENANPWDRKVVVYLVDTSLPDTDTWIHDFMSEYLIELSKVN.

Positions 3–76 constitute an HTH OST-type 1 domain; it reads EGDLVSKMLR…SGEITCYAMA (74 aa). Positions 129–156 are disordered; sequence ASNFSVGKKPNPAPLRDKGNSVGVKPDA. The HTH OST-type 2 domain maps to 233–302; it reads KMDEVQNRIK…GQDLLLYPAK (70 aa). Phosphoserine is present on Ser319. One can recognise an HTH OST-type 3 domain in the interval 337–406; the sequence is MAGDFKEKVA…PQKAILYAKL (70 aa). 2 consecutive Tudor domains span residues 513–570 and 703–760; these read AVNV…FCSL and LPFC…FLQE. The segment at 855–874 is disordered; it reads SGADSPNSKNGNMPMSGNTG. A Phosphoserine modification is found at Ser859. Residues 861–1098 form an interaction with CDK17 region; sequence NSKNGNMPMS…EYLIELSKVN (238 aa). An interaction with CABLES1 region spans residues 893 to 1098; that stretch reads TSAFSTEELP…EYLIELSKVN (206 aa).

It belongs to the TDRD7 family. In terms of assembly, found in a mRNP complex, at least composed of TDRD1, TDRD6, TDRD7 and DDX4. Found in a complex containing CABLES1, CDK16 and CDK17. Interacts with CABLES1, CDK17 and PIWIL1.

The protein resides in the cytoplasm. Component of specific cytoplasmic RNA granules involved in post-transcriptional regulation of specific genes: probably acts by binding to specific mRNAs and regulating their translation. Required for lens transparency during lens development, by regulating translation of genes such as CRYBB3 and HSPB1 in the developing lens. Also required during spermatogenesis. The polypeptide is Tudor domain-containing protein 7 (TDRD7) (Homo sapiens (Human)).